A 1139-amino-acid polypeptide reads, in one-letter code: Solute carrier family 12 member 5 (1139 aa).

Disordered stretches follow at residues 1-63 (MSRR…GKEY) and 92-116 (TNLP…KPVQ). Over 1 to 98 (MSRRFTVTSL…ANYTNLPQGS (98 aa)) the chain is Cytoplasmic. Positions 19–45 (PDPESRRHSVADPRHLPGEDVKGDGNP) are enriched in basic and acidic residues. Residues 46–55 (KESSPFINST) are compositionally biased toward polar residues. At Thr-57 the chain carries Phosphothreonine. The segment covering 98–111 (SREHEEAENNEGGK) has biased composition (basic and acidic residues). A discontinuously helical transmembrane segment spans residues 99-120 (REHEEAENNEGGKKKPVQAPRM). Lys-113 is a binding site for K(+). Residues 121 to 129 (GTFMGVYLP) lie on the Extracellular side of the membrane. The helical transmembrane segment at 130 to 151 (CLQNIFGVILFLRLTWVVGIAG) threads the bilayer. The Cytoplasmic segment spans residues 152–174 (IMESFCMVFICCSCTMLTAISMS). The chain crosses the membrane as a helical span at residues 175-203 (AIATNGVVPAGGSYYMISRSLGPEFGGAV). Ala-184 lines the chloride pocket. Residues 204-229 (GLCFYLGTTFAGAMYILGTIEILLAY) are Extracellular-facing. Transmembrane regions (helical) follow at residues 230–250 (LFPA…AAML) and 251–276 (NNMR…KYVN). The Extracellular portion of the chain corresponds to 277–402 (KFALVFLGCV…ERSGMTSVGL (126 aa)). A disulfide bridge links Cys-310 with Cys-325. N-linked (GlcNAc...) asparagine glycans are attached at residues Asn-314, Asn-333, Asn-351, and Asn-362. An intrachain disulfide couples Cys-345 to Cys-354. Residues 403-420 (ADGTPIDMDHPYVFSDMT) form a helical membrane-spanning segment. Residue Met-410 coordinates K(+). The chloride site is built by Tyr-414 and Val-415. Over 421-429 (SYFTLLVGI) the chain is Cytoplasmic. A helical membrane pass occupies residues 430–453 (YFPSVTGIMAGSNRSGDLRDAQKS). Asp-446 is a K(+) binding site. Topologically, residues 454 to 485 (IPTGTILAIATTSAVYISSVVLFGACIEGVVL) are extracellular. The helical transmembrane segment at 486-513 (RDKFGEAVNGNLVVGTLAWPSPWVIVIG) threads the bilayer. Topologically, residues 514–534 (SFFSTCGAGLQSLTGAPRLLQ) are cytoplasmic. 2 consecutive transmembrane segments (helical) span residues 535-555 (AISR…KANG) and 556-578 (EPTW…ASLD). Glu-569 lines the chloride pocket. Residues 579 to 592 (EVAPILSMFFLMCY) lie on the Cytoplasmic side of the membrane. The next 2 helical transmembrane spans lie at 593–615 (MFVN…PRFR) and 616–632 (YYHW…CLAL). Over 633 to 1139 (MFICSWYYAL…GGREVITIYS (507 aa)) the chain is Cytoplasmic. The scissor helix stretch occupies residues 667-681 (GIRGLSLSAARYALL). Position 929 is a phosphothreonine; by OXSR1 and STK39 (Thr-929). The segment at 942–1052 (MHLTKNERER…GPSPVSSEGI (111 aa)) is disordered. Basic and acidic residues predominate over residues 945-962 (TKNEREREIQSITDESRG). The segment covering 982–994 (TAGDSEEKPEEEV) has biased composition (acidic residues). Residues 1003 to 1012 (PSCPSSSPSP) show a composition bias toward low complexity. A compositionally biased stretch (basic and acidic residues) spans 1023-1042 (DPEKVHLTWTKDKSVAEKNK). At Thr-1030 the chain carries Phosphothreonine; by OXSR1 and STK39. Phosphoserine occurs at positions 1045, 1048, and 1049.

The protein belongs to the SLC12A transporter family. K/Cl co-transporter subfamily. In terms of assembly, homodimer; adopts a domain-swap conformation at the scissor helices connecting the transmembrane domain and C-terminal domain. Heterodimer with K-Cl cotransporters SLC12A6 and SLC12A7. Interacts with AP2A1. Post-translationally, phosphorylated at Thr-929 and Thr-1030 by OXSR1/OSR1 and STK39/SPAK downstream of WNK kinases (WNK1, WNK2, WNK3 or WNK4), inhibiting the potassium-chloride cotransport activity. As to expression, brain specific. Detected in neuronal cells.

The protein resides in the cell membrane. It localises to the cell projection. It is found in the dendrite. The catalysed reaction is K(+)(in) + chloride(in) = K(+)(out) + chloride(out). Its activity is regulated as follows. Inhibited following phosphorylation by OXSR1/OSR1 and STK39/SPAK: phosphorylation takes place downstream of WNK kinases (WNK1, WNK2, WNK3 or WNK4) in response to hyperosmotic stress and subsequent cell shrinkage. In terms of biological role, mediates electroneutral potassium-chloride cotransport in mature neurons and is required for neuronal Cl(-) homeostasis. As major extruder of intracellular chloride, it establishes the low neuronal Cl(-) levels required for chloride influx after binding of GABA-A and glycine to their receptors, with subsequent hyperpolarization and neuronal inhibition. Involved in the regulation of dendritic spine formation and maturation. The sequence is that of Solute carrier family 12 member 5 from Homo sapiens (Human).